The following is a 418-amino-acid chain: Serine hydroxymethyltransferase (418 aa).

Residues L121 and 125-127 contribute to the (6S)-5,6,7,8-tetrahydrofolate site; that span reads GHL. K230 is subject to N6-(pyridoxal phosphate)lysine. 355 to 357 is a binding site for (6S)-5,6,7,8-tetrahydrofolate; that stretch reads SPF.

The protein belongs to the SHMT family. Homodimer. Pyridoxal 5'-phosphate serves as cofactor.

Its subcellular location is the cytoplasm. The enzyme catalyses (6R)-5,10-methylene-5,6,7,8-tetrahydrofolate + glycine + H2O = (6S)-5,6,7,8-tetrahydrofolate + L-serine. It participates in one-carbon metabolism; tetrahydrofolate interconversion. Its pathway is amino-acid biosynthesis; glycine biosynthesis; glycine from L-serine: step 1/1. Its function is as follows. Catalyzes the reversible interconversion of serine and glycine with tetrahydrofolate (THF) serving as the one-carbon carrier. This reaction serves as the major source of one-carbon groups required for the biosynthesis of purines, thymidylate, methionine, and other important biomolecules. Also exhibits THF-independent aldolase activity toward beta-hydroxyamino acids, producing glycine and aldehydes, via a retro-aldol mechanism. The polypeptide is Serine hydroxymethyltransferase (Streptococcus agalactiae serotype III (strain NEM316)).